The sequence spans 354 residues: Uroporphyrinogen decarboxylase (354 aa).

Residues R30 to R34, D79, Y154, S209, and H333 contribute to the substrate site.

This sequence belongs to the uroporphyrinogen decarboxylase family. As to quaternary structure, homodimer.

Its subcellular location is the cytoplasm. The catalysed reaction is uroporphyrinogen III + 4 H(+) = coproporphyrinogen III + 4 CO2. It functions in the pathway porphyrin-containing compound metabolism; protoporphyrin-IX biosynthesis; coproporphyrinogen-III from 5-aminolevulinate: step 4/4. Functionally, catalyzes the decarboxylation of four acetate groups of uroporphyrinogen-III to yield coproporphyrinogen-III. The protein is Uroporphyrinogen decarboxylase of Mycobacterium sp. (strain JLS).